The following is a 308-amino-acid chain: 4-hydroxy-tetrahydrodipicolinate synthase (308 aa).

Residue Thr53 coordinates pyruvate. Tyr141 serves as the catalytic Proton donor/acceptor. The active-site Schiff-base intermediate with substrate is the Lys169. Residue Val209 participates in pyruvate binding.

This sequence belongs to the DapA family. As to quaternary structure, homotetramer; dimer of dimers.

It is found in the cytoplasm. It carries out the reaction L-aspartate 4-semialdehyde + pyruvate = (2S,4S)-4-hydroxy-2,3,4,5-tetrahydrodipicolinate + H2O + H(+). Its pathway is amino-acid biosynthesis; L-lysine biosynthesis via DAP pathway; (S)-tetrahydrodipicolinate from L-aspartate: step 3/4. Its function is as follows. Catalyzes the condensation of (S)-aspartate-beta-semialdehyde [(S)-ASA] and pyruvate to 4-hydroxy-tetrahydrodipicolinate (HTPA). In Acidothermus cellulolyticus (strain ATCC 43068 / DSM 8971 / 11B), this protein is 4-hydroxy-tetrahydrodipicolinate synthase.